A 226-amino-acid chain; its full sequence is Protein DEHYDRATION-INDUCED 19 (226 aa).

Positions 158 to 208 (FPTSDTEETSKPPISIPDDASVIKETPAQPWDSSIDSSLTREEREQKRKQA) are disordered. The span at 196–205 (LTREEREQKR) shows a compositional bias: basic and acidic residues.

The protein belongs to the Di19 family.

The sequence is that of Protein DEHYDRATION-INDUCED 19 (DI19-1) from Oryza sativa subsp. japonica (Rice).